Consider the following 91-residue polypeptide: Progonadoliberin-1 (91 aa).

The N-terminal stretch at 1–23 (MEPIPKLLAGLLLLTLCVVGCSS) is a signal peptide. Gln24 carries the pyrrolidone carboxylic acid modification. Gly33 is subject to Glycine amide.

Belongs to the GnRH family. The precursor is cleaved by ACE, which removes the Gly-Lys-Arg peptide at the C-terminus, leading to mature hormone. The mature form of Gonadoliberin-1 is also cleaved and degraded by ACE.

Its subcellular location is the secreted. In terms of biological role, stimulates the secretion of gonadotropins; it stimulates the secretion of both luteinizing and follicle-stimulating hormones. This chain is Progonadoliberin-1 (GNRH1), found in Sus scrofa (Pig).